The primary structure comprises 136 residues: Small ribosomal subunit protein uS8c (136 aa).

This sequence belongs to the universal ribosomal protein uS8 family. In terms of assembly, part of the 30S ribosomal subunit.

Its subcellular location is the plastid. It is found in the chloroplast. One of the primary rRNA binding proteins, it binds directly to 16S rRNA central domain where it helps coordinate assembly of the platform of the 30S subunit. The sequence is that of Small ribosomal subunit protein uS8c (rps8) from Morus indica (Mulberry).